Here is a 429-residue protein sequence, read N- to C-terminus: Enolase (429 aa).

Gln-163 is a binding site for (2R)-2-phosphoglycerate. Glu-205 (proton donor) is an active-site residue. Mg(2+)-binding residues include Asp-242, Glu-286, and Asp-313. (2R)-2-phosphoglycerate is bound by residues Lys-338, Arg-367, Ser-368, and Lys-389. Lys-338 functions as the Proton acceptor in the catalytic mechanism.

Belongs to the enolase family. Mg(2+) serves as cofactor.

The protein localises to the cytoplasm. The protein resides in the secreted. It localises to the cell surface. It catalyses the reaction (2R)-2-phosphoglycerate = phosphoenolpyruvate + H2O. It functions in the pathway carbohydrate degradation; glycolysis; pyruvate from D-glyceraldehyde 3-phosphate: step 4/5. Catalyzes the reversible conversion of 2-phosphoglycerate (2-PG) into phosphoenolpyruvate (PEP). It is essential for the degradation of carbohydrates via glycolysis. The polypeptide is Enolase (Thermoanaerobacter sp. (strain X514)).